A 224-amino-acid polypeptide reads, in one-letter code: Thiamine-triphosphatase (224 aa).

Ala2 carries the post-translational modification N-acetylalanine. The CYTH domain maps to 5–201; it reads LIEVERKFTP…AKLLVYLQRF (197 aa). Glu7 and Glu9 together coordinate Mg(2+). Substrate-binding residues include Lys11, Arg55, Arg57, Lys65, and Arg125. The Mg(2+) site is built by Asp145, Glu157, and Glu159. Substrate is bound at residue Glu157. Lys193 serves as a coordination point for substrate.

It belongs to the ThTPase family. As to quaternary structure, monomer. It depends on Mg(2+) as a cofactor.

It is found in the cytoplasm. It catalyses the reaction thiamine triphosphate + H2O = thiamine diphosphate + phosphate + H(+). Its function is as follows. Hydrolase highly specific for thiamine triphosphate (ThTP). The chain is Thiamine-triphosphatase (Thtpa) from Rattus norvegicus (Rat).